We begin with the raw amino-acid sequence, 522 residues long: MEEQVPSSANILVIGGGPAGSYAATVLAREGFEVILLEKDVFPRYHIGESMLPSCRPFLKFIDCEEKLKNHGFTMKPGAAVKLNQYKREGYTDFISTNPDNAARNVVRSEFDELLLRHASEMGVHVYEGVRVEEIHFAPDEPTRPISLTWSKEDKTRGTVSFNWLVDASGRNGLMSTRYLKNRTFNKTLRNVAVWGYWTGTSCYAPGTTRENAPWFEALIDETGWAWFIPLHNGTTSVGVVLVEEESKRKKSQYRSECKDKSPSEIQHDCYMADLQRAPGLIQLLGTATFEGKLMSAGDYSYHATEYAGSNFRLAGDAGAFIDPFFSSGIHLALTGGLSAASTIAASIRGDCTESEACGFHNSKVGTAYTRFLLVVLGVYKQIRSQETAVLYDVDEDNFDKAFHFLRPVIQGCADADEGLTEAELQSTLDFCTNVFAPTQPETHEAAIQRLGSLADPDGPLLDTDTIDKLTGTDMEAKHALWKINARKPLHSMYDCKRNFGTEIINGFYVKMEQGVLGLVRT.

Gly-16, Ala-19, and Glu-49 together coordinate FAD. Ser-328 and Gly-329 together coordinate chloride. Ile-330 contacts FAD.

This sequence belongs to the flavin-dependent halogenase family.

The enzyme catalyses melleolide F + FADH2 + chloride + O2 = 6'-chloromelleolide F + FAD + 2 H2O + H(+). Functionally, flavin-dependent halogenase involved in the biosynthesis of melleolides, a range of antifungal and phytotoxic polyketide derivatives composed of an orsellinic acid (OA) moiety esterified to various sesquiterpene alcohols. The halogenase catalyzes the transfer of a single chlorine atom to the melleolide backbone, resulting in a 6'-chloromelleolide product. The enzyme acts on free substrate and does not depend on carrier-protein-dependent acceptor molecules. The protein is Flavin-dependent halogenase armH1 of Armillaria mellea (Honey mushroom).